A 262-amino-acid polypeptide reads, in one-letter code: Pyridoxine 5'-phosphate synthase (262 aa).

Asn6 is a binding site for 3-amino-2-oxopropyl phosphate. 8-9 (DH) contributes to the 1-deoxy-D-xylulose 5-phosphate binding site. 3-amino-2-oxopropyl phosphate is bound at residue Arg17. Residue His43 is the Proton acceptor of the active site. The 1-deoxy-D-xylulose 5-phosphate site is built by Arg45 and His50. Glu70 functions as the Proton acceptor in the catalytic mechanism. Thr102 is a binding site for 1-deoxy-D-xylulose 5-phosphate. Residue His215 is the Proton donor of the active site. 3-amino-2-oxopropyl phosphate is bound by residues Gly216 and 237 to 238 (GH).

Belongs to the PNP synthase family. Homooctamer; tetramer of dimers.

The protein resides in the cytoplasm. The enzyme catalyses 3-amino-2-oxopropyl phosphate + 1-deoxy-D-xylulose 5-phosphate = pyridoxine 5'-phosphate + phosphate + 2 H2O + H(+). The protein operates within cofactor biosynthesis; pyridoxine 5'-phosphate biosynthesis; pyridoxine 5'-phosphate from D-erythrose 4-phosphate: step 5/5. Catalyzes the complicated ring closure reaction between the two acyclic compounds 1-deoxy-D-xylulose-5-phosphate (DXP) and 3-amino-2-oxopropyl phosphate (1-amino-acetone-3-phosphate or AAP) to form pyridoxine 5'-phosphate (PNP) and inorganic phosphate. This Helicobacter pylori (strain ATCC 700392 / 26695) (Campylobacter pylori) protein is Pyridoxine 5'-phosphate synthase.